A 121-amino-acid polypeptide reads, in one-letter code: MRPSLVRLVRPRRPERKTSPILPPLKLYKALLRAHANKLPVELRPLGDQYVKAEFKAHKNIDNPLHIVGFLAQWQDYLKGIDGGEWINGKLSQQDLEKMSPEQIGQLHELMEEAKKAGASE.

The transit peptide at 1–35 (MRPSLVRLVRPRRPERKTSPILPPLKLYKALLRAH) directs the protein to the mitochondrion.

It belongs to the complex I LYR family. SDHAF3 subfamily. Interacts with the iron-sulfur protein subunit within the SDH catalytic dimer.

It localises to the mitochondrion matrix. Plays an essential role in the assembly of succinate dehydrogenase (SDH), an enzyme complex (also referred to as respiratory complex II) that is a component of both the tricarboxylic acid (TCA) cycle and the mitochondrial electron transport chain, and which couples the oxidation of succinate to fumarate with the reduction of ubiquinone (coenzyme Q) to ubiquinol. Promotes maturation of the iron-sulfur protein subunit of the SDH catalytic dimer, protecting it from the deleterious effects of oxidants. May act together with SDHAF1. This is Succinate dehydrogenase assembly factor 3, mitochondrial from Debaryomyces hansenii (strain ATCC 36239 / CBS 767 / BCRC 21394 / JCM 1990 / NBRC 0083 / IGC 2968) (Yeast).